The sequence spans 53 residues: Large ribosomal subunit protein bL32c (53 aa).

This sequence belongs to the bacterial ribosomal protein bL32 family.

Its subcellular location is the plastid. The protein resides in the chloroplast. The protein is Large ribosomal subunit protein bL32c of Glycine max (Soybean).